A 240-amino-acid polypeptide reads, in one-letter code: Regulatory protein RecX (240 aa).

The protein belongs to the RecX family.

Its subcellular location is the cytoplasm. Functionally, modulates RecA activity. This chain is Regulatory protein RecX, found in Lacticaseibacillus paracasei (strain ATCC 334 / BCRC 17002 / CCUG 31169 / CIP 107868 / KCTC 3260 / NRRL B-441) (Lactobacillus paracasei).